Here is a 392-residue protein sequence, read N- to C-terminus: 2,3-bisphosphoglycerate-independent phosphoglycerate mutase (392 aa).

Belongs to the BPG-independent phosphoglycerate mutase family. A-PGAM subfamily.

It carries out the reaction (2R)-2-phosphoglycerate = (2R)-3-phosphoglycerate. It participates in carbohydrate degradation; glycolysis; pyruvate from D-glyceraldehyde 3-phosphate: step 3/5. In terms of biological role, catalyzes the interconversion of 2-phosphoglycerate and 3-phosphoglycerate. This Methanothrix thermoacetophila (strain DSM 6194 / JCM 14653 / NBRC 101360 / PT) (Methanosaeta thermophila) protein is 2,3-bisphosphoglycerate-independent phosphoglycerate mutase.